The following is a 307-amino-acid chain: UDP-3-O-acyl-N-acetylglucosamine deacetylase (307 aa).

Positions 78, 241, and 245 each coordinate Zn(2+). The active-site Proton donor is His-268.

It belongs to the LpxC family. Zn(2+) is required as a cofactor.

The enzyme catalyses a UDP-3-O-[(3R)-3-hydroxyacyl]-N-acetyl-alpha-D-glucosamine + H2O = a UDP-3-O-[(3R)-3-hydroxyacyl]-alpha-D-glucosamine + acetate. The protein operates within glycolipid biosynthesis; lipid IV(A) biosynthesis; lipid IV(A) from (3R)-3-hydroxytetradecanoyl-[acyl-carrier-protein] and UDP-N-acetyl-alpha-D-glucosamine: step 2/6. Its function is as follows. Catalyzes the hydrolysis of UDP-3-O-myristoyl-N-acetylglucosamine to form UDP-3-O-myristoylglucosamine and acetate, the committed step in lipid A biosynthesis. The protein is UDP-3-O-acyl-N-acetylglucosamine deacetylase of Delftia acidovorans (strain DSM 14801 / SPH-1).